The following is a 361-amino-acid chain: Tetraacyldisaccharide 4'-kinase (361 aa).

49–56 (TTGGTGKT) contributes to the ATP binding site.

Belongs to the LpxK family.

It catalyses the reaction a lipid A disaccharide + ATP = a lipid IVA + ADP + H(+). It functions in the pathway glycolipid biosynthesis; lipid IV(A) biosynthesis; lipid IV(A) from (3R)-3-hydroxytetradecanoyl-[acyl-carrier-protein] and UDP-N-acetyl-alpha-D-glucosamine: step 6/6. In terms of biological role, transfers the gamma-phosphate of ATP to the 4'-position of a tetraacyldisaccharide 1-phosphate intermediate (termed DS-1-P) to form tetraacyldisaccharide 1,4'-bis-phosphate (lipid IVA). The chain is Tetraacyldisaccharide 4'-kinase from Chlorobaculum parvum (strain DSM 263 / NCIMB 8327) (Chlorobium vibrioforme subsp. thiosulfatophilum).